The chain runs to 306 residues: MALCALTSALRSLSLASAAITARVPTLLPAAQIQSNVLLQLPPALVSPSYRPVHMSADRSAKFVSWKSRTKYTVKPVKMRKSGGRDHTGRIRVHGIGGGHKQNYRMIDFLRFRPEKEKAPEPFEEKVVVVRYDPCRSADIALVAGGSRKRWIIATENMKAGDTILNSNHIGRMAVAAQEGDAHPLGALPVGTLINNVESEPGRGAQYIRAAGTCGVLLRKVNGTAIIQLPSKRQMQVLESCTATVGRVSNVNHNQRVIGKAGRNRWLGKRPNSGLWQRKGGWAGRKIRPLPPMKSYVKLPSAAAQN.

A mitochondrion-targeting transit peptide spans 1–60; that stretch reads MALCALTSALRSLSLASAAITARVPTLLPAAQIQSNVLLQLPPALVSPSYRPVHMSADRS.

Belongs to the universal ribosomal protein uL2 family. Component of the mitochondrial ribosome large subunit (39S) which comprises a 16S rRNA and about 50 distinct proteins.

The protein localises to the mitochondrion. In Mus musculus (Mouse), this protein is Large ribosomal subunit protein uL2m (Mrpl2).